The sequence spans 490 residues: Lysine--tRNA ligase (490 aa).

Positions 398 and 405 each coordinate Mg(2+).

This sequence belongs to the class-II aminoacyl-tRNA synthetase family. In terms of assembly, homodimer. The cofactor is Mg(2+).

It localises to the cytoplasm. The catalysed reaction is tRNA(Lys) + L-lysine + ATP = L-lysyl-tRNA(Lys) + AMP + diphosphate. The polypeptide is Lysine--tRNA ligase (Metamycoplasma arthritidis (strain 158L3-1) (Mycoplasma arthritidis)).